A 378-amino-acid chain; its full sequence is Spermidine/putrescine import ATP-binding protein PotA (378 aa).

The region spanning 18-248 (VLLSGISKSF…PKNLFVAGFI (231 aa)) is the ABC transporter domain. Residue 50–57 (GPSGCGKT) participates in ATP binding.

This sequence belongs to the ABC transporter superfamily. Spermidine/putrescine importer (TC 3.A.1.11.1) family. The complex is composed of two ATP-binding proteins (PotA), two transmembrane proteins (PotB and PotC) and a solute-binding protein (PotD).

Its subcellular location is the cell inner membrane. It catalyses the reaction ATP + H2O + polyamine-[polyamine-binding protein]Side 1 = ADP + phosphate + polyamineSide 2 + [polyamine-binding protein]Side 1.. Functionally, part of the ABC transporter complex PotABCD involved in spermidine/putrescine import. Responsible for energy coupling to the transport system. The chain is Spermidine/putrescine import ATP-binding protein PotA from Salmonella paratyphi A (strain ATCC 9150 / SARB42).